Reading from the N-terminus, the 185-residue chain is ATP synthase subunit delta (185 aa).

This sequence belongs to the ATPase delta chain family. F-type ATPases have 2 components, F(1) - the catalytic core - and F(0) - the membrane proton channel. F(1) has five subunits: alpha(3), beta(3), gamma(1), delta(1), epsilon(1). CF(0) has four main subunits: a(1), b(1), b'(1) and c(10-14). The alpha and beta chains form an alternating ring which encloses part of the gamma chain. F(1) is attached to F(0) by a central stalk formed by the gamma and epsilon chains, while a peripheral stalk is formed by the delta, b and b' chains.

It localises to the cellular thylakoid membrane. Functionally, f(1)F(0) ATP synthase produces ATP from ADP in the presence of a proton or sodium gradient. F-type ATPases consist of two structural domains, F(1) containing the extramembraneous catalytic core and F(0) containing the membrane proton channel, linked together by a central stalk and a peripheral stalk. During catalysis, ATP synthesis in the catalytic domain of F(1) is coupled via a rotary mechanism of the central stalk subunits to proton translocation. Its function is as follows. This protein is part of the stalk that links CF(0) to CF(1). It either transmits conformational changes from CF(0) to CF(1) or is implicated in proton conduction. The complex from the organism is particularly stable to disruption and remains functional after 6 hrs at 55 degrees Celsius. The polypeptide is ATP synthase subunit delta (Thermosynechococcus vestitus (strain NIES-2133 / IAM M-273 / BP-1)).